Consider the following 246-residue polypeptide: Peroxisomal membrane protein 11A (246 aa).

Over 1–93 (MDAFIRVANQ…LCLTLANLNR (93 aa)) the chain is Cytoplasmic. Residues 94–114 (VVYYICDTVLWAKSVGLTSGV) traverse the membrane as a helical segment. Topologically, residues 115–217 (NREKWQRWAA…LNQLGIYKSN (103 aa)) are lumenal. A helical transmembrane segment spans residues 218–238 (LGVVGLGGLISSLAGLLTVVY). The required for homodimerization, interaction with PEX11G, and peroxisomal localization stretch occupies residues 218–238 (LGVVGLGGLISSLAGLLTVVY). Over 239–246 (PQLKLKAR) the chain is Cytoplasmic.

The protein belongs to the peroxin-11 family. Homodimer. Heterodimer with PEX11G. Probably interacts with COPB2 and COPA. Interacts with PEX19. Interacts with FIS1. Strongly expressed in liver and at lower levels in heart, brain, kidney and testis.

The protein resides in the peroxisome membrane. Functionally, may be involved in peroxisomal proliferation and may regulate peroxisomes division. May mediate binding of coatomer proteins to the peroxisomal membrane. Promotes membrane protrusion and elongation on the peroxisomal surface. The sequence is that of Peroxisomal membrane protein 11A (Pex11a) from Mus musculus (Mouse).